Consider the following 182-residue polypeptide: ADP-ribosylation factor 3 (182 aa).

The N-myristoyl glycine moiety is linked to residue Gly2. Residues 24 to 31 (GLDNAGKT), 67 to 71 (DLGGQ), and 126 to 129 (NKQD) each bind GTP.

This sequence belongs to the small GTPase superfamily. Arf family. In terms of assembly, interacts with GRIP; but preferentially when bound to GTP.

It localises to the golgi apparatus. Functionally, GTP-binding protein involved in protein trafficking; may modulate vesicle budding and uncoating within the Golgi apparatus. The chain is ADP-ribosylation factor 3 (ARF3) from Arabidopsis thaliana (Mouse-ear cress).